Reading from the N-terminus, the 221-residue chain is Phosphatidylethanolamine-binding protein homolog F40A3.3 (221 aa).

Belongs to the phosphatidylethanolamine-binding protein family.

In Caenorhabditis elegans, this protein is Phosphatidylethanolamine-binding protein homolog F40A3.3.